We begin with the raw amino-acid sequence, 452 residues long: UDP-N-acetylmuramoylalanine--D-glutamate ligase (452 aa).

Position 119 to 125 (119 to 125) interacts with ATP; that stretch reads GSNGKTT.

Belongs to the MurCDEF family.

Its subcellular location is the cytoplasm. It carries out the reaction UDP-N-acetyl-alpha-D-muramoyl-L-alanine + D-glutamate + ATP = UDP-N-acetyl-alpha-D-muramoyl-L-alanyl-D-glutamate + ADP + phosphate + H(+). It functions in the pathway cell wall biogenesis; peptidoglycan biosynthesis. In terms of biological role, cell wall formation. Catalyzes the addition of glutamate to the nucleotide precursor UDP-N-acetylmuramoyl-L-alanine (UMA). This Streptococcus pyogenes serotype M2 (strain MGAS10270) protein is UDP-N-acetylmuramoylalanine--D-glutamate ligase.